The primary structure comprises 457 residues: UDP-glucosyltransferase 45 (457 aa).

The active-site Proton acceptor is the histidine 21. Residue histidine 21 participates in an anthocyanidin binding. The active-site Charge relay is the aspartate 112. The UDP-alpha-D-glucose site is built by threonine 134, glutamine 336, histidine 351, tryptophan 354, asparagine 355, serine 356, glutamate 359, aspartate 375, and glutamine 376.

This sequence belongs to the UDP-glycosyltransferase family.

It catalyses the reaction (20S)-protopanaxadiol + UDP-alpha-D-glucose = (20S)-ginsenoside Rh2 + UDP + H(+). The protein operates within secondary metabolite biosynthesis; terpenoid biosynthesis. In terms of biological role, component of the triterpene saponins (e.g. PPD-type ginsenosides) biosynthetic pathway. Glycosyltransferase that catalyzes the biosynthesis of ginsenoside Rh2 from protopanaxadiol (PPD). The polypeptide is UDP-glucosyltransferase 45 (Panax ginseng (Korean ginseng)).